A 63-amino-acid polypeptide reads, in one-letter code: Small ribosomal subunit protein bS21 (63 aa).

It belongs to the bacterial ribosomal protein bS21 family.

In Porphyromonas gingivalis (strain ATCC BAA-308 / W83), this protein is Small ribosomal subunit protein bS21.